A 525-amino-acid polypeptide reads, in one-letter code: Chromosomal replication initiator protein DnaA (525 aa).

The segment at 1–71 (MNDFWQHCSA…SDLAREFWNT (71 aa)) is domain I, interacts with DnaA modulators. Residues 71 to 188 (TPIEVQFVLD…GEADSMYERS (118 aa)) form a domain II region. The disordered stretch occupies residues 162–182 (AGRRTWRPGPGAAPANGGEAD). A compositionally biased stretch (low complexity) spans 169-181 (PGPGAAPANGGEA). The domain III, AAA+ region stretch occupies residues 189–405 (KLNPVLTFDN…GALRKILAYS (217 aa)). ATP contacts are provided by Gly-233, Gly-235, Lys-236, and Thr-237. Residues 406-525 (KFHGREISIE…LHVLEQTLKG (120 aa)) are domain IV, binds dsDNA.

The protein belongs to the DnaA family. As to quaternary structure, oligomerizes as a right-handed, spiral filament on DNA at oriC.

The protein localises to the cytoplasm. Plays an essential role in the initiation and regulation of chromosomal replication. ATP-DnaA binds to the origin of replication (oriC) to initiate formation of the DNA replication initiation complex once per cell cycle. Binds the DnaA box (a 9 base pair repeat at the origin) and separates the double-stranded (ds)DNA. Forms a right-handed helical filament on oriC DNA; dsDNA binds to the exterior of the filament while single-stranded (ss)DNA is stabiized in the filament's interior. The ATP-DnaA-oriC complex binds and stabilizes one strand of the AT-rich DNA unwinding element (DUE), permitting loading of DNA polymerase. After initiation quickly degrades to an ADP-DnaA complex that is not apt for DNA replication. Binds acidic phospholipids. This chain is Chromosomal replication initiator protein DnaA, found in Burkholderia cenocepacia (strain HI2424).